The sequence spans 32 residues: Basic phospholipase A2 (32 aa).

Ca(2+)-binding residues include tyrosine 26, glycine 28, and glycine 30.

Belongs to the phospholipase A2 family. Group II subfamily. It depends on Ca(2+) as a cofactor. In terms of tissue distribution, expressed by the venom gland.

Its subcellular location is the secreted. It carries out the reaction a 1,2-diacyl-sn-glycero-3-phosphocholine + H2O = a 1-acyl-sn-glycero-3-phosphocholine + a fatty acid + H(+). Its function is as follows. Snake venom phospholipase A2 (PLA2) that inhibits neuromuscular transmission by blocking acetylcholine release from the nerve termini. PLA2 catalyzes the calcium-dependent hydrolysis of the 2-acyl groups in 3-sn-phosphoglycerides. This is Basic phospholipase A2 from Gloydius halys (Chinese water mocassin).